The primary structure comprises 596 residues: MRKHGWQLPYHPLQVVAVAVFLALGFAFYVFFAPFVGKKIHQYIAMGIYTPLITCVVGLYIWCAASDPADRGVFRSKKYLKIPENGKFPLAKDIKDGCGSATGGAKSHDGTCVEDTENGSNKKLESSERSSLLRLLCSPCALLCSCCSGKDESSEQMSEDGMFYCSLCEVEVFKYSKHCRVCDKCVDRFDHHCRWLNNCIGKRNYRKFFSLMVSAIFLLIMQWSTGIFVLVLCLLRRNQFNADIALKLGSSFSLIPFVIVVGVCTVLAMLATLPLAQLFFFHILLIKKGISTYDYIVALREQEQELEAGGGQQSPQMSMISSFTGLSSASSFNTFHRGAWCTPPRLFLEDQFDVVPPENASVSSYGKKSVVEERVKKKPQPVKISPWTLARLNAEEVSKAAAEARKKSKIIQPVARRENPFVGLEASSSFGSSGRRMFPTKYEGVNNNGKQRRQSKRIRLPAELPLEPLMNVQTKAAMETSTSSGLAPLQLEARSAFQTSRAMSGSGNVMVTSSPESSLDSHDIHPFRVSSEAEDAAQLNGFSSAVGLMGQQRGQQQQQQLSMMMMPLSRSTSDGYDASGGEDSDQVPSRNIHKSR.

2 helical membrane-spanning segments follow: residues 15–35 (VVAV…FAPF) and 44–64 (IAMG…IWCA). A disordered region spans residues 102 to 125 (TGGAKSHDGTCVEDTENGSNKKLE). Positions 163-213 (FYCSLCEVEVFKYSKHCRVCDKCVDRFDHHCRWLNNCIGKRNYRKFFSLMV) constitute a DHHC domain. Catalysis depends on cysteine 193, which acts as the S-palmitoyl cysteine intermediate. Helical transmembrane passes span 215–235 (AIFL…LCLL) and 254–274 (LIPF…ATLP). 3 disordered regions span residues 433–455 (SGRR…RRQS), 498–523 (QTSR…DSHD), and 549–596 (MGQQ…HKSR). Over residues 498–518 (QTSRAMSGSGNVMVTSSPESS) the composition is skewed to polar residues. Low complexity predominate over residues 549–571 (MGQQRGQQQQQQLSMMMMPLSRS).

Belongs to the DHHC palmitoyltransferase family.

It localises to the cell membrane. It is found in the cytoplasmic vesicle membrane. It catalyses the reaction L-cysteinyl-[protein] + hexadecanoyl-CoA = S-hexadecanoyl-L-cysteinyl-[protein] + CoA. Its function is as follows. Palmitoyl acyltransferase. The protein is Probable protein S-acyltransferase 22 (PAT22) of Arabidopsis thaliana (Mouse-ear cress).